The sequence spans 38 residues: Defensin (38 aa).

3 disulfide bridges follow: cysteine 4–cysteine 26, cysteine 11–cysteine 34, and cysteine 15–cysteine 36.

Belongs to the invertebrate defensin family. Type 2 subfamily.

The protein resides in the secreted. In terms of biological role, mediates the inducible antibacterial activity in larvae of A.cyanea. This is Defensin from Aeshna cyanea (Southern hawker dragonfly).